A 425-amino-acid chain; its full sequence is Glycosyl hydrolase family 109 protein 2 (425 aa).

Residues 29 to 30 (NR), glutamate 51, 99 to 102 (WLTH), 119 to 120 (EV), and asparagine 148 each bind NAD(+). Tyrosine 177 contributes to the substrate binding site. NAD(+) contacts are provided by residues 194-198 (FHNHW) and tyrosine 211. Residues 211–214 (YPTH) and tyrosine 293 each bind substrate.

This sequence belongs to the Gfo/Idh/MocA family. Glycosyl hydrolase 109 subfamily. The cofactor is NAD(+).

Functionally, glycosidase. This chain is Glycosyl hydrolase family 109 protein 2, found in Bacteroides fragilis (strain YCH46).